Here is a 357-residue protein sequence, read N- to C-terminus: AA9 family lytic polysaccharide monooxygenase B (357 aa).

An N-terminal signal peptide occupies residues 1–18 (MKFSSVLALAASAKLVAS). Cu(2+) is bound by residues His19 and His101. The tract at residues 19–234 (HATVFAVWIN…IPGPAVWDGA (216 aa)) is catalytic. An intrachain disulfide couples Cys61 to Cys182. 2 residues coordinate O2: His168 and Gln177. Position 179 (Tyr179) interacts with Cu(2+). Residues 235 to 318 (SSGSGSSGSG…SAAPTGGTGT (84 aa)) are ser/Thr-rich linker. Positions 292-317 (SVRPTTSAAPTTSAPTSSAAPTGGTG) are disordered. Positions 295–313 (PTTSAAPTTSAPTSSAAPT) are enriched in low complexity. Residues 319–355 (GSIQIYQQCGGMNYKGATGCASGLTCKQWNPYYHQCV) enclose the CBM1 domain.

This sequence belongs to the polysaccharide monooxygenase AA9 family. Cu(2+) serves as cofactor.

The protein resides in the secreted. The enzyme catalyses [(1-&gt;4)-beta-D-glucosyl]n+m + reduced acceptor + O2 = 4-dehydro-beta-D-glucosyl-[(1-&gt;4)-beta-D-glucosyl]n-1 + [(1-&gt;4)-beta-D-glucosyl]m + acceptor + H2O.. In terms of biological role, lytic polysaccharide monooxygenase (LPMO) that depolymerizes crystalline and amorphous polysaccharides via the oxidation of scissile alpha- or beta-(1-4)-glycosidic bonds, yielding C4 oxidation products. Catalysis by LPMOs requires the reduction of the active-site copper from Cu(II) to Cu(I) by a reducing agent and H(2)O(2) or O(2) as a cosubstrate. Active on carboxymethylcellulose (CMC), hydroxyethylcellulose (HEC) and beta-glucan. Also active on soluble cellohexaose, a property that is restricted to only a few characterized LPMOs. The chain is AA9 family lytic polysaccharide monooxygenase B from Emericella nidulans (strain FGSC A4 / ATCC 38163 / CBS 112.46 / NRRL 194 / M139) (Aspergillus nidulans).